The chain runs to 397 residues: DNA-directed RNA polymerase subunit Rpo1C (397 aa).

The protein belongs to the RNA polymerase beta' chain family. As to quaternary structure, part of the RNA polymerase complex.

It is found in the cytoplasm. The enzyme catalyses RNA(n) + a ribonucleoside 5'-triphosphate = RNA(n+1) + diphosphate. DNA-dependent RNA polymerase (RNAP) catalyzes the transcription of DNA into RNA using the four ribonucleoside triphosphates as substrates. Forms part of the jaw domain. The protein is DNA-directed RNA polymerase subunit Rpo1C of Methanosarcina acetivorans (strain ATCC 35395 / DSM 2834 / JCM 12185 / C2A).